A 118-amino-acid chain; its full sequence is Nucleoid-associated protein CTN_1899 (118 aa).

The protein belongs to the YbaB/EbfC family. In terms of assembly, homodimer.

The protein localises to the cytoplasm. The protein resides in the nucleoid. Functionally, binds to DNA and alters its conformation. May be involved in regulation of gene expression, nucleoid organization and DNA protection. This chain is Nucleoid-associated protein CTN_1899, found in Thermotoga neapolitana (strain ATCC 49049 / DSM 4359 / NBRC 107923 / NS-E).